The sequence spans 124 residues: Acidic phospholipase A2 BA1 (124 aa).

Intrachain disulfides connect Cys-26–Cys-116, Cys-28–Cys-44, Cys-43–Cys-95, Cys-49–Cys-124, Cys-50–Cys-88, Cys-57–Cys-81, and Cys-75–Cys-86. Residues Tyr-27, Gly-29, and Gly-31 each contribute to the Ca(2+) site. Residue His-47 is part of the active site. Asp-48 is a Ca(2+) binding site. The active site involves Asp-89.

It belongs to the phospholipase A2 family. Group II subfamily. D49 sub-subfamily. Ca(2+) is required as a cofactor. As to expression, expressed by the venom gland.

The protein resides in the secreted. It catalyses the reaction a 1,2-diacyl-sn-glycero-3-phosphocholine + H2O = a 1-acyl-sn-glycero-3-phosphocholine + a fatty acid + H(+). In terms of biological role, PLA2 catalyzes the calcium-dependent hydrolysis of the 2-acyl groups in 3-sn-phosphoglycerides. In Gloydius halys (Chinese water mocassin), this protein is Acidic phospholipase A2 BA1.